The sequence spans 179 residues: Probable inosine/xanthosine triphosphatase (179 aa).

13–18 provides a ligand contact to substrate; sequence STNPVK. Gln-70 provides a ligand contact to Mg(2+).

Belongs to the YjjX NTPase family. As to quaternary structure, homodimer. Mg(2+) serves as cofactor. Mn(2+) is required as a cofactor.

It carries out the reaction XTP + H2O = XDP + phosphate + H(+). The enzyme catalyses ITP + H2O = IDP + phosphate + H(+). Its function is as follows. Phosphatase that hydrolyzes non-canonical purine nucleotides such as XTP and ITP to their respective diphosphate derivatives. Probably excludes non-canonical purines from DNA/RNA precursor pool, thus preventing their incorporation into DNA/RNA and avoiding chromosomal lesions. The polypeptide is Probable inosine/xanthosine triphosphatase (Methanocaldococcus jannaschii (strain ATCC 43067 / DSM 2661 / JAL-1 / JCM 10045 / NBRC 100440) (Methanococcus jannaschii)).